Consider the following 196-residue polypeptide: Large ribosomal subunit protein mL66 (196 aa).

The transit peptide at 1–34 directs the protein to the mitochondrion; it reads MAALKALVSGCGRLLRGLLAGPAATSWSRLPARG.

Belongs to the bacterial ribosomal protein bS18 family. Mitochondrion-specific ribosomal protein mL66 subfamily. As to quaternary structure, component of the mitochondrial large ribosomal subunit (mt-LSU). Mature mammalian 55S mitochondrial ribosomes consist of a small (28S) and a large (39S) subunit. The 28S small subunit contains a 12S ribosomal RNA (12S mt-rRNA) and 30 different proteins. The 39S large subunit contains a 16S rRNA (16S mt-rRNA), a copy of mitochondrial valine transfer RNA (mt-tRNA(Val)), which plays an integral structural role, and 52 different proteins. mL66 forms a zinc-binding site with uL10m.

It localises to the mitochondrion. The protein is Large ribosomal subunit protein mL66 (MRPS18A) of Homo sapiens (Human).